We begin with the raw amino-acid sequence, 112 residues long: Large ribosomal subunit protein mL53 (112 aa).

It belongs to the mitochondrion-specific ribosomal protein mL53 family. Component of the mitochondrial ribosome large subunit (39S) which comprises a 16S rRNA and about 50 distinct proteins.

It localises to the mitochondrion. The protein is Large ribosomal subunit protein mL53 (MRPL53) of Pongo abelii (Sumatran orangutan).